We begin with the raw amino-acid sequence, 387 residues long: Apoptosis-inducing factor homolog B (387 aa).

FAD is bound by residues 12 to 16 (GGGYG), Arg-47, and Asp-292.

The protein belongs to the FAD-dependent oxidoreductase family. FAD serves as cofactor.

In terms of biological role, putative FAD-dependent oxidoreductase. This Dictyostelium discoideum (Social amoeba) protein is Apoptosis-inducing factor homolog B (aifB).